The chain runs to 345 residues: S-adenosylmethionine:tRNA ribosyltransferase-isomerase (345 aa).

This sequence belongs to the QueA family. As to quaternary structure, monomer.

Its subcellular location is the cytoplasm. The catalysed reaction is 7-aminomethyl-7-carbaguanosine(34) in tRNA + S-adenosyl-L-methionine = epoxyqueuosine(34) in tRNA + adenine + L-methionine + 2 H(+). It functions in the pathway tRNA modification; tRNA-queuosine biosynthesis. Functionally, transfers and isomerizes the ribose moiety from AdoMet to the 7-aminomethyl group of 7-deazaguanine (preQ1-tRNA) to give epoxyqueuosine (oQ-tRNA). In Acidiphilium cryptum (strain JF-5), this protein is S-adenosylmethionine:tRNA ribosyltransferase-isomerase.